A 328-amino-acid polypeptide reads, in one-letter code: Phosphate acyltransferase (328 aa).

Belongs to the PlsX family. In terms of assembly, homodimer. Probably interacts with PlsY.

It is found in the cytoplasm. The catalysed reaction is a fatty acyl-[ACP] + phosphate = an acyl phosphate + holo-[ACP]. It participates in lipid metabolism; phospholipid metabolism. Functionally, catalyzes the reversible formation of acyl-phosphate (acyl-PO(4)) from acyl-[acyl-carrier-protein] (acyl-ACP). This enzyme utilizes acyl-ACP as fatty acyl donor, but not acyl-CoA. This is Phosphate acyltransferase from Campylobacter jejuni subsp. jejuni serotype O:23/36 (strain 81-176).